We begin with the raw amino-acid sequence, 453 residues long: Protein ECM18 (453 aa).

Residues 130 to 435 (LLIHGYAASS…SGHNLFLDNP (306 aa)) enclose the AB hydrolase-1 domain. An HXXXXD motif motif is present at residues 428 to 433 (HNLFLD).

It belongs to the peptidase S33 family. ABHD4/ABHD5 subfamily.

Its subcellular location is the mitochondrion. Its function is as follows. May be involved in cell wall organization and biogenesis. The chain is Protein ECM18 (ECM18) from Saccharomyces cerevisiae (strain ATCC 204508 / S288c) (Baker's yeast).